A 376-amino-acid chain; its full sequence is UDP-4-amino-4,6-dideoxy-N-acetyl-beta-L-altrosamine transaminase (376 aa).

Residues Tyr4, 24–27 (EILT), Ala54, and Ser176 each bind substrate. Lys181 is subject to N6-(pyridoxal phosphate)lysine. Residues Asn226 and 311–314 (QVHY) contribute to the substrate site.

Belongs to the DegT/DnrJ/EryC1 family.

The catalysed reaction is UDP-4-amino-4,6-dideoxy-N-acetyl-beta-L-altrosamine + 2-oxoglutarate = UDP-2-acetamido-2,6-dideoxy-beta-L-arabino-hex-4-ulose + L-glutamate. Functionally, catalyzes the second step in the biosynthesis of pseudaminic acid, a sialic-acid-like sugar that is used to modify flagellin. Uses UDP-2-acetamido-2,6-dideoxy-beta-L-arabino-4-hexulose as substrate producing UDP-4-amino-4,6-dideoxy-beta-L-AltNAc. The polypeptide is UDP-4-amino-4,6-dideoxy-N-acetyl-beta-L-altrosamine transaminase (pseC) (Campylobacter jejuni subsp. jejuni serotype O:23/36 (strain 81-176)).